Consider the following 711-residue polypeptide: Taperin (711 aa).

Disordered regions lie at residues 134–305, 328–384, and 414–438; these read SRLL…APKP, RNSF…LGKS, and QRPS…GLRV. The segment covering 157–180 has biased composition (pro residues); it reads PPPPPPPPAPPRPPPAAPSPPAAP. The span at 197-206 shows a compositional bias: polar residues; it reads LQKTGSNSFT. Ser-241 is subject to Phosphoserine. Over residues 267-282 the composition is skewed to low complexity; the sequence is TPSATPASPPASATPS. Positions 283–296 are enriched in polar residues; it reads QRQCVSAATSTNDS. 3 positions are modified to phosphoserine: Ser-362, Ser-418, and Ser-463. Disordered regions lie at residues 500-535, 572-630, 642-662, and 674-711; these read TFTV…EEAS, SRKK…EKPF, SVRP…SYTP, and QALE…ALYF. Composition is skewed to polar residues over residues 512–521 and 581–590; these read LQDQHFSQAN and NDKSLQTTFE. Residues 597–624 are compositionally biased toward acidic residues; that stretch reads LEQEEEVDQQEEEEEEEEEEEEEEEGSG.

This sequence belongs to the taperin family. As to quaternary structure, interacts with GRXCR2; the interaction restricts TPRN to the stereocilum basal region. Interacts with actin ACTB; the interaction may stabilize stereocilia. Interacts with CLIC5. Interacts with PTPRQ. TPRN, CLIC5 and PTPQR form concentric rings at the base of stereocilia and may form a complex. Interacts with phosphatase PPP1CA; the interaction results in inhibition of PPC1A phosphatase activity. Interacts with DNA damage response proteins XRCC6/KU70, XRCC5/KU80, PARP1, TOP1 and TOP2A; these interactions recruit TPRN to sites of DNA damage where it may play a role in DNA repair. As to expression, expression is detected in fetal cochlea.

The protein localises to the cell projection. It is found in the stereocilium. It localises to the microvillus. Its subcellular location is the nucleus. The protein resides in the nucleoplasm. The protein localises to the cytoplasm. Its function is as follows. Essential for hearing. Required for maintenance of stereocilia on both inner and outer hair cells. Necessary for the integrity of the stereociliary rootlet. May act as an actin cytoskeleton regulator involved in the regulation of actin dynamics at the pointed end in hair cells. Forms rings at the base of stereocilia and binds actin filaments in the stereocilia which may stabilize the stereocilia. Acts as a strong inhibitor of PPP1CA phosphatase activity. Recruited to sites of DNA damage and may play a role in DNA damage repair. This is Taperin (TPRN) from Homo sapiens (Human).